We begin with the raw amino-acid sequence, 402 residues long: Nodal homolog 4-A (402 aa).

Positions 1 to 18 are cleaved as a signal peptide; it reads MHLYFYCLILLFVPGGNS. Positions 19–278 are excised as a propeptide; sequence LGINSYLKHM…TIAHTRRHRR (260 aa). N-linked (GlcNAc...) asparagine glycans are attached at residues asparagine 37, asparagine 238, and asparagine 340. 3 disulfides stabilise this stretch: cysteine 302–cysteine 368, cysteine 331–cysteine 399, and cysteine 335–cysteine 401.

This sequence belongs to the TGF-beta family. Homodimer; disulfide-linked. As to expression, during blastula stages, expressed in the endoderm at a higher level dorsally than ventrally. Expressed in the deep cells of the Spemann organizer at the gastrula stage. Expressed in the notochord (a derivative of the organizer) and neural tube during the neural stages.

The protein resides in the secreted. Its function is as follows. Cooperation and regulatory loops of multiple nodals are essential for mesendoderm patterning in early embryos. Plays a role in mesoderm formation and may be required for neural development. The chain is Nodal homolog 4-A (nodal4-a) from Xenopus laevis (African clawed frog).